A 342-amino-acid polypeptide reads, in one-letter code: N-acetyl-gamma-glutamyl-phosphate reductase (342 aa).

C149 is a catalytic residue.

This sequence belongs to the NAGSA dehydrogenase family. Type 1 subfamily.

Its subcellular location is the cytoplasm. The enzyme catalyses N-acetyl-L-glutamate 5-semialdehyde + phosphate + NADP(+) = N-acetyl-L-glutamyl 5-phosphate + NADPH + H(+). It participates in amino-acid biosynthesis; L-arginine biosynthesis; N(2)-acetyl-L-ornithine from L-glutamate: step 3/4. Functionally, catalyzes the NADPH-dependent reduction of N-acetyl-5-glutamyl phosphate to yield N-acetyl-L-glutamate 5-semialdehyde. The polypeptide is N-acetyl-gamma-glutamyl-phosphate reductase (Cereibacter sphaeroides (strain ATCC 17023 / DSM 158 / JCM 6121 / CCUG 31486 / LMG 2827 / NBRC 12203 / NCIMB 8253 / ATH 2.4.1.) (Rhodobacter sphaeroides)).